Here is a 290-residue protein sequence, read N- to C-terminus: NAD kinase (290 aa).

Residue aspartate 72 is the Proton acceptor of the active site. NAD(+)-binding positions include 72–73, lysine 77, 145–146, aspartate 175, 186–191, and alanine 210; these read DG, NE, and TAYSLS.

This sequence belongs to the NAD kinase family. A divalent metal cation is required as a cofactor.

It is found in the cytoplasm. The enzyme catalyses NAD(+) + ATP = ADP + NADP(+) + H(+). In terms of biological role, involved in the regulation of the intracellular balance of NAD and NADP, and is a key enzyme in the biosynthesis of NADP. Catalyzes specifically the phosphorylation on 2'-hydroxyl of the adenosine moiety of NAD to yield NADP. This Bacteroides fragilis (strain ATCC 25285 / DSM 2151 / CCUG 4856 / JCM 11019 / LMG 10263 / NCTC 9343 / Onslow / VPI 2553 / EN-2) protein is NAD kinase.